The following is a 124-amino-acid chain: Prefoldin subunit beta (124 aa).

It belongs to the prefoldin subunit beta family. In terms of assembly, heterohexamer of two alpha and four beta subunits.

It localises to the cytoplasm. In terms of biological role, molecular chaperone capable of stabilizing a range of proteins. Seems to fulfill an ATP-independent, HSP70-like function in archaeal de novo protein folding. The protein is Prefoldin subunit beta (pfdB) of Thermoplasma acidophilum (strain ATCC 25905 / DSM 1728 / JCM 9062 / NBRC 15155 / AMRC-C165).